A 704-amino-acid chain; its full sequence is Transcription factor HNF-4 homolog (704 aa).

Positions 93–133 (SAGGGSASSGSNNNNSMFSPNNNLSGSGSGTNSSQQQLQQQ) are disordered. Low complexity predominate over residues 100 to 133 (SSGSNNNNSMFSPNNNLSGSGSGTNSSQQQLQQQ). The nuclear receptor DNA-binding region spans 139-214 (PTVCAICGDR…AGMKKEAVQN (76 aa)). 2 NR C4-type zinc fingers span residues 142-162 (CAICGDRATGKHYGASSCDGC) and 178-197 (CRFARNCVVDKDKRNQCRYC). Residues 232–470 (GNGLSVISLV…SLLQEMLLGG (239 aa)) enclose the NR LBD domain. Disordered regions lie at residues 474-520 (DNPL…GSHS), 563-624 (PASV…QRMH), and 684-704 (PAGYGTEPCRMTLKQEPETGY). Residues 487–512 (DYQSPTHTGNMEGGNQVNSSLDSLAT) are compositionally biased toward polar residues. Positions 563 to 574 (PASVAPASISPP) are enriched in low complexity. A compositionally biased stretch (polar residues) spans 608–620 (GSRSGPLPTQHSP).

This sequence belongs to the nuclear hormone receptor family. NR2 subfamily. As to quaternary structure, homodimer. In third instar larvae, expressed at high levels in midgut and attached gastric caeca, fat body, Malpighian tubules and oenocytes, and at lower levels in proventriculus, salivary glands, epidermis, brain and ring gland. Not detected in imaginal disks and the median neurosecretory cells that produce insulin-like peptides (at protein level). In developing embryos, expressed in mid-gut, fat bodies and the distal region of Malpighian tubules.

It is found in the nucleus. Transcriptionally controlled transcription factor. Important for the differentiation of various specialized cell types that arise from both endoderm and mesoderm. May have a role in early gut formation. Plays an essential role in lipid catabolism, regulating lipid mobilization and beta-oxidation in response to nutrient deprivation. This Drosophila melanogaster (Fruit fly) protein is Transcription factor HNF-4 homolog (Hnf4).